The sequence spans 477 residues: Cytochrome P450 708A2 (477 aa).

The helical transmembrane segment at 3–23 (FVWSAAVWVIAVAAVVISKWL) threads the bilayer. Residue Cys-426 participates in heme binding.

It belongs to the cytochrome P450 family. It depends on heme as a cofactor. Expressed primarily in the root epidermis.

Its subcellular location is the membrane. In terms of biological role, hydroxylates thalianol into thalian-diol. The polypeptide is Cytochrome P450 708A2 (CYP708A2) (Arabidopsis thaliana (Mouse-ear cress)).